A 553-amino-acid chain; its full sequence is Arginine--tRNA ligase (553 aa).

The short motif at 130–140 is the 'HIGH' region element; that stretch reads ANPTGDLHIGH.

Belongs to the class-I aminoacyl-tRNA synthetase family. Monomer.

The protein localises to the cytoplasm. It carries out the reaction tRNA(Arg) + L-arginine + ATP = L-arginyl-tRNA(Arg) + AMP + diphosphate. The chain is Arginine--tRNA ligase from Staphylococcus aureus (strain MSSA476).